A 264-amino-acid polypeptide reads, in one-letter code: Undecaprenyl-diphosphatase (264 aa).

Transmembrane regions (helical) follow at residues 7 to 27, 41 to 61, 89 to 109, 114 to 134, 144 to 164, 186 to 206, 219 to 239, and 244 to 264; these read IVLA…SAHL, LIFD…YYQA, VLLG…FVAV, IEII…ASWF, TISW…LIPG, IQFS…LMLI, LLVL…IFVI, and MVGM…LFFL.

Belongs to the UppP family.

The protein resides in the cell inner membrane. It carries out the reaction di-trans,octa-cis-undecaprenyl diphosphate + H2O = di-trans,octa-cis-undecaprenyl phosphate + phosphate + H(+). Catalyzes the dephosphorylation of undecaprenyl diphosphate (UPP). Confers resistance to bacitracin. The chain is Undecaprenyl-diphosphatase from Vesicomyosocius okutanii subsp. Calyptogena okutanii (strain HA).